The following is a 101-amino-acid chain: ATP-dependent Clp protease adapter protein ClpS (101 aa).

It belongs to the ClpS family. Binds to the N-terminal domain of the chaperone ClpA.

In terms of biological role, involved in the modulation of the specificity of the ClpAP-mediated ATP-dependent protein degradation. This is ATP-dependent Clp protease adapter protein ClpS from Treponema denticola (strain ATCC 35405 / DSM 14222 / CIP 103919 / JCM 8153 / KCTC 15104).